Here is a 54-residue protein sequence, read N- to C-terminus: Hydrophobic protein RCI2A (54 aa).

Helical transmembrane passes span S2–L22 and I32–L52.

The protein belongs to the UPF0057 (PMP3) family.

Its subcellular location is the membrane. This Arabidopsis thaliana (Mouse-ear cress) protein is Hydrophobic protein RCI2A (RCI2A).